The chain runs to 269 residues: Shikimate dehydrogenase (NADP(+)) (269 aa).

Shikimate contacts are provided by residues 14-16 and Thr-61; that span reads SKS. Lys-65 serves as the catalytic Proton acceptor. Residue Glu-77 coordinates NADP(+). Shikimate-binding residues include Asn-86 and Asp-102. NADP(+) is bound by residues 126 to 130, 149 to 154, and Met-213; these read GAGGA and NRTLSK. Residue Tyr-215 participates in shikimate binding. Residue Gly-238 coordinates NADP(+).

This sequence belongs to the shikimate dehydrogenase family. Homodimer.

It carries out the reaction shikimate + NADP(+) = 3-dehydroshikimate + NADPH + H(+). It functions in the pathway metabolic intermediate biosynthesis; chorismate biosynthesis; chorismate from D-erythrose 4-phosphate and phosphoenolpyruvate: step 4/7. In terms of biological role, involved in the biosynthesis of the chorismate, which leads to the biosynthesis of aromatic amino acids. Catalyzes the reversible NADPH linked reduction of 3-dehydroshikimate (DHSA) to yield shikimate (SA). In Pasteurella multocida (strain Pm70), this protein is Shikimate dehydrogenase (NADP(+)).